The sequence spans 395 residues: Lipoyl synthase, mitochondrial (395 aa).

The N-terminal 24 residues, 1 to 24, are a transit peptide targeting the mitochondrion; it reads MVKLPSASRIRSLATVPSTATRAF. Cysteine 107, cysteine 112, cysteine 118, cysteine 137, cysteine 141, cysteine 144, and serine 357 together coordinate [4Fe-4S] cluster. In terms of domain architecture, Radical SAM core spans 122-346; sequence GKGNATATIM…KNVAEGMGFL (225 aa).

This sequence belongs to the radical SAM superfamily. Lipoyl synthase family. Requires [4Fe-4S] cluster as cofactor.

Its subcellular location is the mitochondrion. The enzyme catalyses [[Fe-S] cluster scaffold protein carrying a second [4Fe-4S](2+) cluster] + N(6)-octanoyl-L-lysyl-[protein] + 2 oxidized [2Fe-2S]-[ferredoxin] + 2 S-adenosyl-L-methionine + 4 H(+) = [[Fe-S] cluster scaffold protein] + N(6)-[(R)-dihydrolipoyl]-L-lysyl-[protein] + 4 Fe(3+) + 2 hydrogen sulfide + 2 5'-deoxyadenosine + 2 L-methionine + 2 reduced [2Fe-2S]-[ferredoxin]. It participates in protein modification; protein lipoylation via endogenous pathway; protein N(6)-(lipoyl)lysine from octanoyl-[acyl-carrier-protein]: step 2/2. Catalyzes the radical-mediated insertion of two sulfur atoms into the C-6 and C-8 positions of the octanoyl moiety bound to the lipoyl domains of lipoate-dependent enzymes, thereby converting the octanoylated domains into lipoylated derivatives. In Cryptococcus neoformans var. neoformans serotype D (strain B-3501A) (Filobasidiella neoformans), this protein is Lipoyl synthase, mitochondrial.